The following is a 1278-amino-acid chain: Cytoplasmic FMR1-interacting protein 2 (1278 aa).

An N6-acetyllysine modification is found at lysine 1062.

The protein belongs to the CYFIP family. In terms of assembly, component of the WAVE1 complex composed of ABI2, CYFIP2, BRK1, NCKAP1 and WASF1/WAVE1. Interacts with FMR1, FXR1 and FXR2. Interacts with FMR1 isoform 6; the interaction occurs in a RNA-dependent manner. Interacts with RAC1 (activated form) which causes the complex to dissociate, releasing activated WASF1. The complex can also be activated by NCK1. Interacts with SHANK3; the interaction mediates the association of SHANK3 with the WAVE1 complex. Interacts with TMEM108 (via N-terminus); the interaction associates TMEM108 with the WAVE1 complex. In terms of tissue distribution, expressed in T-cells. Increased expression is observed in CD4(+) T-lymphocytes from patients with multiple sclerosis (at protein level).

It is found in the cytoplasm. The protein resides in the nucleus. It localises to the perinuclear region. Its subcellular location is the synapse. The protein localises to the synaptosome. In terms of biological role, involved in T-cell adhesion and p53/TP53-dependent induction of apoptosis. Does not bind RNA. As component of the WAVE1 complex, required for BDNF-NTRK2 endocytic trafficking and signaling from early endosomes. This is Cytoplasmic FMR1-interacting protein 2 from Homo sapiens (Human).